The primary structure comprises 463 residues: Asparagine--tRNA ligase (463 aa).

This sequence belongs to the class-II aminoacyl-tRNA synthetase family. As to quaternary structure, homodimer.

The protein localises to the cytoplasm. The enzyme catalyses tRNA(Asn) + L-asparagine + ATP = L-asparaginyl-tRNA(Asn) + AMP + diphosphate + H(+). This chain is Asparagine--tRNA ligase, found in Clostridium novyi (strain NT).